The following is a 333-amino-acid chain: Fructose-1,6-bisphosphatase class 1 (333 aa).

The Mg(2+) site is built by Glu-90, Asp-112, Leu-114, and Asp-115. Substrate contacts are provided by residues 115-118 (DGSS), Asn-207, and Lys-273. Residue Glu-279 participates in Mg(2+) binding.

This sequence belongs to the FBPase class 1 family. Homotetramer. Mg(2+) is required as a cofactor.

It localises to the cytoplasm. It catalyses the reaction beta-D-fructose 1,6-bisphosphate + H2O = beta-D-fructose 6-phosphate + phosphate. Its pathway is carbohydrate biosynthesis; gluconeogenesis. The polypeptide is Fructose-1,6-bisphosphatase class 1 (Aromatoleum aromaticum (strain DSM 19018 / LMG 30748 / EbN1) (Azoarcus sp. (strain EbN1))).